Reading from the N-terminus, the 171-residue chain is Regulatory protein RecX (171 aa).

This sequence belongs to the RecX family.

The protein localises to the cytoplasm. In terms of biological role, modulates RecA activity. The chain is Regulatory protein RecX from Mycobacterium leprae (strain Br4923).